The primary structure comprises 326 residues: MAFTPFPPRQPTASARLPLTLMTLDDWALATITGADSEKYMQGQVTADVSQMTEDQHLLAAHCDAKGKMWSNLRLFRDGDGFAWIERRSVREPQLTELKKYAVFSKVTIAPDDERVLLGVAGFQARAALANLFSELPSREKQVVKEGATTLLWFEHPAERFLIVTDEATANMLTDKLRGEAELNNSQQWLALNIEAGFPVIDAANSGQFIPQATNLQALGGISFKKGCYTGQEMVARAKFRGANKRALWLLTGSASRLPEAGEDLELKMGENWRRTGTVLAAVKLEDGQVVVQVVMNNDMEPDSIFRVRDDANTLRIEPLPYSLEE.

Residues Trp-27 and Trp-189 each coordinate folate.

It belongs to the tRNA-modifying YgfZ family.

It localises to the cytoplasm. Folate-binding protein involved in regulating the level of ATP-DnaA and in the modification of some tRNAs. It is probably a key factor in regulatory networks that act via tRNA modification, such as initiation of chromosomal replication. The chain is tRNA-modifying protein YgfZ from Escherichia coli O6:K15:H31 (strain 536 / UPEC).